We begin with the raw amino-acid sequence, 2339 residues long: DNA-directed RNA polymerase III subunit RPC1 (2339 aa).

Zn(2+) contacts are provided by cysteine 88, cysteine 91, cysteine 98, histidine 101, cysteine 128, cysteine 131, and cysteine 175. Mg(2+) contacts are provided by aspartate 611, aspartate 613, and aspartate 615. Residues 955–967 (PTEFFFHTMSGRE) are bridging helix. Disordered regions lie at residues 1503 to 1557 (EKRK…NNYY) and 2038 to 2079 (LKSE…DSDR). Residues 1509–1520 (PKEEKENFDRNN) are compositionally biased toward basic and acidic residues. The span at 1521–1557 (YKMITDNNNNDNNNNNNDNNNNDNNNNNNNSNNNNYY) shows a compositional bias: low complexity. Residues 2038-2047 (LKSEKKKDIN) are compositionally biased toward basic and acidic residues. The segment covering 2049 to 2059 (DNNNNDDNNNN) has biased composition (low complexity).

Belongs to the RNA polymerase beta' chain family. Component of the RNA polymerase III (Pol III) complex consisting of 17 subunits.

The protein localises to the nucleus. It carries out the reaction RNA(n) + a ribonucleoside 5'-triphosphate = RNA(n+1) + diphosphate. Its function is as follows. DNA-dependent RNA polymerase catalyzes the transcription of DNA into RNA using the four ribonucleoside triphosphates as substrates. Largest and catalytic core component of RNA polymerase III which synthesizes small RNAs, such as 5S rRNA and tRNAs. Forms the polymerase active center together with the second largest subunit. A single-stranded DNA template strand of the promoter is positioned within the central active site cleft of Pol III. A bridging helix emanates from RPC1 and crosses the cleft near the catalytic site and is thought to promote translocation of Pol III by acting as a ratchet that moves the RNA-DNA hybrid through the active site by switching from straight to bent conformations at each step of nucleotide addition. The protein is DNA-directed RNA polymerase III subunit RPC1 of Plasmodium falciparum.